The primary structure comprises 80 residues: MVIIRLSRKGSKNKPFYQIVASDNRKPRDGKFIEKLGFFNPISIEKSKKIFIKTDRINLWMSKGAKLSDRVKNLLHKYKK.

Belongs to the bacterial ribosomal protein bS16 family.

The protein is Small ribosomal subunit protein bS16 of Wigglesworthia glossinidia brevipalpis.